Reading from the N-terminus, the 554-residue chain is Dihydroxy-acid dehydratase (554 aa).

Residue Asp78 coordinates Mg(2+). Cys119 is a binding site for [2Fe-2S] cluster. Mg(2+)-binding residues include Asp120 and Lys121. Lys121 carries the N6-carboxylysine modification. [2Fe-2S] cluster is bound at residue Cys192. Glu443 serves as a coordination point for Mg(2+). The active-site Proton acceptor is the Ser469.

It belongs to the IlvD/Edd family. Homodimer. [2Fe-2S] cluster serves as cofactor. It depends on Mg(2+) as a cofactor.

It catalyses the reaction (2R)-2,3-dihydroxy-3-methylbutanoate = 3-methyl-2-oxobutanoate + H2O. It carries out the reaction (2R,3R)-2,3-dihydroxy-3-methylpentanoate = (S)-3-methyl-2-oxopentanoate + H2O. Its pathway is amino-acid biosynthesis; L-isoleucine biosynthesis; L-isoleucine from 2-oxobutanoate: step 3/4. The protein operates within amino-acid biosynthesis; L-valine biosynthesis; L-valine from pyruvate: step 3/4. In terms of biological role, functions in the biosynthesis of branched-chain amino acids. Catalyzes the dehydration of (2R,3R)-2,3-dihydroxy-3-methylpentanoate (2,3-dihydroxy-3-methylvalerate) into 2-oxo-3-methylpentanoate (2-oxo-3-methylvalerate) and of (2R)-2,3-dihydroxy-3-methylbutanoate (2,3-dihydroxyisovalerate) into 2-oxo-3-methylbutanoate (2-oxoisovalerate), the penultimate precursor to L-isoleucine and L-valine, respectively. This chain is Dihydroxy-acid dehydratase, found in Shouchella clausii (strain KSM-K16) (Alkalihalobacillus clausii).